Here is a 120-residue protein sequence, read N- to C-terminus: uncharacterized protein (120 aa).

This is an uncharacterized protein from Acanthamoeba polyphaga mimivirus (APMV).